The following is a 411-amino-acid chain: Corticotropin-releasing factor receptor 2 (411 aa).

A signal peptide (not cleaved) is located at residues Met1–Ala19. Residues Met1 to Lys108 lie on the Extracellular side of the membrane. Residues Asn13, Asn41, Asn74, Asn86, and Asn94 are each glycosylated (N-linked (GlcNAc...) asparagine). Intrachain disulfides connect Cys14-Cys50, Cys40-Cys83, and Cys64-Cys98. The helical transmembrane segment at Tyr109 to Leu139 threads the bilayer. Over Val140–Cys146 the chain is Cytoplasmic. Residues Leu147–Leu171 form a helical membrane-spanning segment. The Extracellular portion of the chain corresponds to Ile172 to Arg185. An intrachain disulfide couples Cys184 to Cys254. A helical transmembrane segment spans residues Cys186–Val214. The Cytoplasmic portion of the chain corresponds to Met215–His221. A helical membrane pass occupies residues Leu222 to Tyr249. Residues Glu250–Asp265 are Extracellular-facing. A helical transmembrane segment spans residues Tyr266–Met291. Topologically, residues Thr292–Thr302 are cytoplasmic. A helical membrane pass occupies residues Ile303–Phe327. The Extracellular segment spans residues Val328–Asp334. A helical transmembrane segment spans residues Leu335 to Gly364. At Glu365–Val411 the chain is on the cytoplasmic side.

Belongs to the G-protein coupled receptor 2 family. In terms of assembly, monomer. Interacts with CRF, UCN, UCN2 and UCN3. An N-glycosylation site within the signal peptide impedes its proper cleavage and function. In terms of tissue distribution, highly expressed in the heart. Also expressed in lungs, skeletal muscle, gastrointestinal tract, epididymis, and brain.

The protein resides in the cell membrane. In terms of biological role, G-protein coupled receptor for CRH (corticotropin-releasing factor), UCN (urocortin), UCN2 and UCN3. Has high affinity for UCN. Ligand binding causes a conformation change that triggers signaling via guanine nucleotide-binding proteins (G proteins) and down-stream effectors, such as adenylate cyclase. Promotes the activation of adenylate cyclase, leading to increased intracellular cAMP levels. The protein is Corticotropin-releasing factor receptor 2 (Crhr2) of Mus musculus (Mouse).